The chain runs to 103 residues: Small ribosomal subunit protein uS10 (103 aa).

The protein belongs to the universal ribosomal protein uS10 family. As to quaternary structure, part of the 30S ribosomal subunit.

Functionally, involved in the binding of tRNA to the ribosomes. This is Small ribosomal subunit protein uS10 from Xanthomonas axonopodis pv. citri (strain 306).